A 269-amino-acid polypeptide reads, in one-letter code: Interleukin-1 beta (269 aa).

Positions 1-116 are excised as a propeptide; the sequence is MAEVPELASE…TRNNDACVHD (116 aa).

It belongs to the IL-1 family. As to quaternary structure, monomer. In its precursor form, weakly interacts with full-length MEFV; the mature cytokine does not interact at all. Interacts with integrins ITGAV:ITGBV and ITGA5:ITGB1; integrin-binding is required for IL1B signaling. Interacts with cargo receptor TMED10; the interaction is direct and is required for the secretion of IL1B mature form. Interacts with HSP90AB1; the interaction facilitates cargo translocation into the ERGIC. Interacts with HSP90B1; the interaction facilitates cargo translocation into the ERGIC.

The protein resides in the cytoplasm. It localises to the cytosol. It is found in the secreted. The protein localises to the lysosome. Its subcellular location is the extracellular exosome. Functionally, potent pro-inflammatory cytokine. Initially discovered as the major endogenous pyrogen, induces prostaglandin synthesis, neutrophil influx and activation, T-cell activation and cytokine production, B-cell activation and antibody production, and fibroblast proliferation and collagen production. Promotes Th17 differentiation of T-cells. Synergizes with IL12/interleukin-12 to induce IFNG synthesis from T-helper 1 (Th1) cells. Plays a role in angiogenesis by inducing VEGF production synergistically with TNF and IL6. Involved in transduction of inflammation downstream of pyroptosis: its mature form is specifically released in the extracellular milieu by passing through the gasdermin-D (GSDMD) pore. The protein is Interleukin-1 beta (IL1B) of Macaca nemestrina (Pig-tailed macaque).